A 43-amino-acid polypeptide reads, in one-letter code: Photosystem I reaction center subunit IX (43 aa).

Residues 7–27 traverse the membrane as a helical segment; that stretch reads YLSVAPVLSTLWFGSLAGLLI.

The protein belongs to the PsaJ family.

The protein resides in the plastid. Its subcellular location is the chloroplast thylakoid membrane. In terms of biological role, may help in the organization of the PsaE and PsaF subunits. The protein is Photosystem I reaction center subunit IX of Aethionema cordifolium (Lebanon stonecress).